We begin with the raw amino-acid sequence, 151 residues long: Small ribosomal subunit protein uS13 (151 aa).

Residues Arg131 to Gln151 form a disordered region. A compositionally biased stretch (basic residues) spans Gln133–Gln151.

The protein belongs to the universal ribosomal protein uS13 family. Part of the 30S ribosomal subunit. Forms a loose heterodimer with protein S19. Forms two bridges to the 50S subunit in the 70S ribosome.

Its function is as follows. Located at the top of the head of the 30S subunit, it contacts several helices of the 16S rRNA. In the 70S ribosome it contacts the 23S rRNA (bridge B1a) and protein L5 of the 50S subunit (bridge B1b), connecting the 2 subunits; these bridges are implicated in subunit movement. This chain is Small ribosomal subunit protein uS13, found in Methanopyrus kandleri (strain AV19 / DSM 6324 / JCM 9639 / NBRC 100938).